Reading from the N-terminus, the 526-residue chain is Histidine-rich glycoprotein (526 aa).

Positions 1 to 8 (ATLQCSWA) are cleaved as a signal peptide. 2 consecutive Cystatin domains span residues 9–126 (LTPT…SALA) and 127–243 (NTKD…NISG). Intrachain disulfides connect cysteine 14/cysteine 505, cysteine 68/cysteine 79, cysteine 95/cysteine 116, cysteine 193/cysteine 415, cysteine 207/cysteine 230, and cysteine 272/cysteine 302. The segment at 31–74 (WRRDGYLFQLLRVADAHLDGAESATVYYLVLDVKETDCSVLSRK) is interaction with ATP5F1A. Residues asparagine 115 and asparagine 192 are each glycosylated (N-linked (GlcNAc...) asparagine). The N-linked (GlcNAc...) asparagine glycan is linked to asparagine 240. A disordered region spans residues 243-449 (GFRPHLGKTP…GKRGPGKGHF (207 aa)). Residues 260–269 (DHHHPHKPHK) are compositionally biased toward basic residues. Residue asparagine 310 is glycosylated (N-linked (GlcNAc...) asparagine). Basic residues predominate over residues 328 to 346 (PPPHGHHPHGPPPHGHHPH). A compositionally biased stretch (pro residues) spans 347 to 401 (GPPPHGHPPHGPPPRHPPHGPPPHGHPPHGPPPHGHPPHGPPPHGHPPHGPPPHG). Basic and acidic residues predominate over residues 408–429 (GFHDHGPCDPPSHKEGPQDLHQ). The segment covering 438 to 449 (HPGKRGPGKGHF) has biased composition (basic residues). Residue asparagine 485 is glycosylated (N-linked (GlcNAc...) asparagine).

Interacts with THBS1 (via the TSP type I repeats); the interaction blocks the antiangiogenic effect of THBS1 with CD36. Interacts with THBS2; the interaction blocks the antiangiogenic effect of THBS2 with CD36. Interacts with HPSE; the interaction is enhanced at acidic pH, partially inhibits binding of HPSE to cell surface receptors and modulates its enzymatic activity. Interacts (via the HRR domain) with TMP1; the interaction partially mediates the antiangiogenic properties of HRG. Interacts with kappa and lambda light chains of IgG molecules. Interacts with ATP5F1A; the interaction occurs on the surface of T-cells and alters their cell morphology in concert with CONA. Binds IgG molecules containing kappa and lambda light chains and inhibits the formation of insoluble immunoglobulin complexes. Interacts with F12; the interaction, which is enhanced in the presence of zinc ions and inhibited by heparin-binding to HRG, inhibits factor XII autoactivation and contact-initiated coagulation. Interacts with PLG (via its Kringle domains); the interaction tethers PLG to the cell surface and enhances its activation. Interacts (via the HRR domain) with TPM1; the interaction appears to contribute to the antiangiogenic properties of the HRR domain. N-glycosylated. In terms of processing, proteolytic cleavage produces several HRG fragments which are mostly disulfide-linked and, therefore, not released. On platelet activation, may release a 33 kDa antiangiogenic peptide which encompasses the HRR.

Its subcellular location is the secreted. In terms of biological role, plasma glycoprotein that binds a number of ligands such as heme, heparin, heparan sulfate, thrombospondin, plasminogen, and divalent metal ions. Inhibits rosette formation. Acts as an adapter protein and implicated in regulating many processes such as immune complex and pathogen clearance, cell adhesion, angiogenesis, coagulation and fibrinolysis. Mediates clearance of necrotic cells through enhancing the phagocytosis of necrotic cells in a heparan sulfate-dependent pathway. This process can be regulated by the presence of certain HRG ligands such as heparin and zinc ions. Binds to IgG subclasses of immunoglobins containing kappa and lambda light chains with different affinities regulating their clearance and inhibiting the formation of insoluble immune complexes. Binds T-cells and alters the cell morphology Modulates angiogenesis by blocking the CD6-mediated antiangiongenic effect of thrombospondins, THBS1 and THBS2. Tethers plasminogen to the cell surface. The protein is Histidine-rich glycoprotein (HRG) of Oryctolagus cuniculus (Rabbit).